The sequence spans 90 residues: Small ribosomal subunit protein bS20 (90 aa).

Positions 1–28 (MPNTSSASKRLRQNEKRRLLNRATRSNM) are disordered.

The protein belongs to the bacterial ribosomal protein bS20 family.

Its function is as follows. Binds directly to 16S ribosomal RNA. This is Small ribosomal subunit protein bS20 from Rhodopirellula baltica (strain DSM 10527 / NCIMB 13988 / SH1).